Reading from the N-terminus, the 194-residue chain is Kallikrein-like enzyme LV-Ka (194 aa).

5 cysteine pairs are disulfide-bonded: C7-C99, C44-C192, C78-C146, C110-C125, and C136-C161. The Peptidase S1 domain maps to 36–185 (LNQEDKFICP…YTEWIQSIIA (150 aa)). The active-site Charge relay system is S140.

Belongs to the peptidase S1 family. Snake venom subfamily. As to quaternary structure, monomer. In terms of processing, N-glycosylated. Expressed by the venom gland.

It localises to the secreted. Its activity is regulated as follows. Completely inhibited by the serine protease inhibitors NPGB and PMSF, partially inhibited by benzamidines, and weakly or not inhibited by SBTI and EDTA. In terms of biological role, shows kallikrein-like activity, releasing bradykinin from kininogen. Also activates plasminogen, which is also a plasma kallikrein activity. Is active upon the kallikrein substrates S-2266 and S-2302, suggesting a preference for Arg in P1 position. In vivo, lowers blood pressure after intravenous injection in rat. This is Kallikrein-like enzyme LV-Ka from Lachesis muta muta (Bushmaster).